The following is a 177-amino-acid chain: MEERNHENTLEKDLEAVGQEAQALEERLKAAEEELKGLKDKYLRLLADFDNYRKRMEEELKAREREGVLKALRALLPVLDDLDRALEFAEASPESIRQGVRAIRDGFFRILAGLGVEEVPGEGEAFDPRYHEAVGLLPGEPGKVAKVFQRGFRMGEALVRPARVAVGEEKREEADLE.

Belongs to the GrpE family. In terms of assembly, homodimer. K(+) serves as cofactor.

The protein localises to the cytoplasm. Its function is as follows. Participates actively in the response to hyperosmotic and heat shock by preventing the aggregation of stress-denatured proteins, in association with DnaK and GrpE. It is the nucleotide exchange factor for DnaK and may function as a thermosensor. Unfolded proteins bind initially to DnaJ; upon interaction with the DnaJ-bound protein, DnaK hydrolyzes its bound ATP, resulting in the formation of a stable complex. GrpE releases ADP from DnaK; ATP binding to DnaK triggers the release of the substrate protein, thus completing the reaction cycle. Several rounds of ATP-dependent interactions between DnaJ, DnaK and GrpE are required for fully efficient folding. This chain is Protein GrpE, found in Thermus thermophilus (strain ATCC 27634 / DSM 579 / HB8).